Reading from the N-terminus, the 39-residue chain is Photosystem II reaction center protein J (39 aa).

Residues 7 to 27 form a helical membrane-spanning segment; sequence IPLWIVATVAGTGVLVVVGLF.

The protein belongs to the PsbJ family. In terms of assembly, PSII is composed of 1 copy each of membrane proteins PsbA, PsbB, PsbC, PsbD, PsbE, PsbF, PsbH, PsbI, PsbJ, PsbK, PsbL, PsbM, PsbT, PsbX, PsbY, PsbZ, Psb30/Ycf12, peripheral proteins PsbO, CyanoQ (PsbQ), PsbU, PsbV and a large number of cofactors. It forms dimeric complexes.

The protein resides in the cellular thylakoid membrane. Functionally, one of the components of the core complex of photosystem II (PSII). PSII is a light-driven water:plastoquinone oxidoreductase that uses light energy to abstract electrons from H(2)O, generating O(2) and a proton gradient subsequently used for ATP formation. It consists of a core antenna complex that captures photons, and an electron transfer chain that converts photonic excitation into a charge separation. This is Photosystem II reaction center protein J from Synechococcus elongatus (strain ATCC 33912 / PCC 7942 / FACHB-805) (Anacystis nidulans R2).